A 269-amino-acid chain; its full sequence is 3-deoxy-manno-octulosonate cytidylyltransferase (269 aa).

This sequence belongs to the KdsB family.

The protein localises to the cytoplasm. It carries out the reaction 3-deoxy-alpha-D-manno-oct-2-ulosonate + CTP = CMP-3-deoxy-beta-D-manno-octulosonate + diphosphate. Its pathway is nucleotide-sugar biosynthesis; CMP-3-deoxy-D-manno-octulosonate biosynthesis; CMP-3-deoxy-D-manno-octulosonate from 3-deoxy-D-manno-octulosonate and CTP: step 1/1. The protein operates within bacterial outer membrane biogenesis; lipopolysaccharide biosynthesis. Activates KDO (a required 8-carbon sugar) for incorporation into bacterial lipopolysaccharide in Gram-negative bacteria. The protein is 3-deoxy-manno-octulosonate cytidylyltransferase of Cupriavidus taiwanensis (strain DSM 17343 / BCRC 17206 / CCUG 44338 / CIP 107171 / LMG 19424 / R1) (Ralstonia taiwanensis (strain LMG 19424)).